Reading from the N-terminus, the 360-residue chain is Photosystem II protein D1 (360 aa).

The next 3 helical transmembrane spans lie at 30-47, 119-134, and 143-157; these read YVGW…AATT, HFLI…QWEL, and WICV…AAFA. Chlorophyll a is bound at residue histidine 119. A pheophytin a-binding site is contributed by tyrosine 127. 2 residues coordinate [CaMn4O5] cluster: aspartate 171 and glutamate 190. A helical transmembrane segment spans residues 198-219; the sequence is FHMAGVAGMFGGALFSAMHGSL. A chlorophyll a-binding site is contributed by histidine 199. Residues histidine 216 and 265 to 266 contribute to the a quinone site; that span reads SF. Histidine 216 contributes to the Fe cation binding site. Residue histidine 273 coordinates Fe cation. Residues 275–289 traverse the membrane as a helical segment; that stretch reads FLASWPVICVWLTSM. [CaMn4O5] cluster is bound by residues histidine 333, glutamate 334, aspartate 343, and alanine 345. Residues 346 to 360 constitute a propeptide that is removed on maturation; the sequence is AAESTSVALVAPAIG.

The protein belongs to the reaction center PufL/M/PsbA/D family. In terms of assembly, PSII is composed of 1 copy each of membrane proteins PsbA, PsbB, PsbC, PsbD, PsbE, PsbF, PsbH, PsbI, PsbJ, PsbK, PsbL, PsbM, PsbT, PsbX, PsbY, Psb30/Ycf12, peripheral proteins PsbO, CyanoQ (PsbQ), PsbU, PsbV and a large number of cofactors. It forms dimeric complexes. The D1/D2 heterodimer binds P680, chlorophylls that are the primary electron donor of PSII, and subsequent electron acceptors. It shares a non-heme iron and each subunit binds pheophytin, quinone, additional chlorophylls, carotenoids and lipids. D1 provides most of the ligands for the Mn4-Ca-O5 cluster of the oxygen-evolving complex (OEC). There is also a Cl(-1) ion associated with D1 and D2, which is required for oxygen evolution. The PSII complex binds additional chlorophylls, carotenoids and specific lipids. serves as cofactor. Post-translationally, tyr-162 forms a radical intermediate that is referred to as redox-active TyrZ, YZ or Y-Z. C-terminally processed by CtpA; processing is essential to allow assembly of the oxygen-evolving complex and thus photosynthetic growth.

The protein resides in the cellular thylakoid membrane. The catalysed reaction is 2 a plastoquinone + 4 hnu + 2 H2O = 2 a plastoquinol + O2. Functionally, photosystem II (PSII) is a light-driven water:plastoquinone oxidoreductase that uses light energy to abstract electrons from H(2)O, generating O(2) and a proton gradient subsequently used for ATP formation. It consists of a core antenna complex that captures photons, and an electron transfer chain that converts photonic excitation into a charge separation. The D1/D2 (PsbA/PsbD) reaction center heterodimer binds P680, the primary electron donor of PSII as well as several subsequent electron acceptors. The polypeptide is Photosystem II protein D1 (Prochlorococcus marinus (strain NATL1A)).